A 496-amino-acid polypeptide reads, in one-letter code: SRCTHLENRDFVTGTQGTTRVTLVLELGGCVTITAEGKPSVDVWLDAIYQESPAKTREYCLHAKLSETKVAARCPTMGPAVLTEEHQIGTVCKRDQSDRGWGNHCGLFGKGSIVACVKAACEAKKKATGYVYDANKIVYTVKVEPHTGDYVAANETHKGRKTTTFTVSSEKTILTLGEYGDVSLLCRVASGVNLAQTIILELDKTAEHLPTAWQVHRDWFNDLALPWKHDGNPHWNNAERLVEFGVPHAVKMDVYNLGDQTGVLLKALAGVPVAHIEGNKYHLKSGHVTCEVGLENLKMKGLTYTMCDKSKFTWKRTPTDSGHDTVVMEVTFSGSKPCRIPVRAVAHGSPDVNVAMLITPNPTIENDGGGFIEMQLPPGDNIIYVGELSHQWFQTGSSIGRVFQTTRKGIERLTVIGEHAWDFGSAGGFFSSIGKAVHTVLGGAFNSIFGGVGFLPKLLMGVALAWLGLNTRNPTMSMSFLLAGGLVLAMTLGVGA.

Topologically, residues serine 1 to serine 447 are extracellular. 6 cysteine pairs are disulfide-bonded: cysteine 3/cysteine 30, cysteine 60/cysteine 116, cysteine 60/cysteine 121, cysteine 74/cysteine 105, cysteine 92/cysteine 116, and cysteine 92/cysteine 121. The tract at residues aspartate 98 to glycine 111 is fusion peptide. N-linked (GlcNAc...) asparagine; by host glycosylation is present at asparagine 154. 2 disulfide bridges follow: cysteine 186/cysteine 290 and cysteine 307/cysteine 338. The chain crosses the membrane as a helical span at residues isoleucine 448–glycine 468. The Cytoplasmic segment spans residues leucine 469–serine 479. A helical membrane pass occupies residues phenylalanine 480–alanine 496.

Homodimer; in the endoplasmic reticulum and Golgi. In terms of processing, N-glycosylated.

It localises to the virion membrane. The protein resides in the host endoplasmic reticulum membrane. Functionally, binds to host cell surface receptor and mediates fusion between viral and cellular membranes. Envelope protein is synthesized in the endoplasmic reticulum in the form of heterodimer with protein prM. They play a role in virion budding in the ER, and the newly formed immature particle is covered with 60 spikes composed of heterodimer between precursor prM and envelope protein E. The virion is transported to the Golgi apparatus where the low pH causes dissociation of PrM-E heterodimers and formation of E homodimers. prM-E cleavage is ineficient, and many virions are only partially matured. These uncleaved prM would play a role in immune evasion. The sequence is that of Genome polyprotein from Louping ill virus (strain Negishi 3248/49/P10) (Li).